We begin with the raw amino-acid sequence, 198 residues long: Suppressor of cytokine signaling 2 (198 aa).

Positions 1-29 (MTLRCLEPSGNGADRTRSQWGTAGLPEEQ) are disordered. An interaction with AREL1 region spans residues 1–75 (MTLRCLEPSG…PEGTFLIRDS (75 aa)). At S30 the chain carries Phosphoserine. In terms of domain architecture, SH2 spans 48–156 (WYWGSMTVNE…TVHLYLTKPL (109 aa)). At S52 the chain carries Phosphoserine; by PKC. The region spanning 151–197 (YLTKPLYTSAPTLQHFCRLAINKCTGTIWGLPLPTRLKDYLEEYKFQ) is the SOCS box domain. K173 participates in a covalent cross-link: Glycyl lysine isopeptide (Lys-Gly) (interchain with G-Cter in ubiquitin).

Substrate-recognition component of the ECS(SOCS2) complex, composed of SOCS2, CUL5, ELOB, ELOC and RNF7/RBX2. Interacts with IGF1R. Interacts with DCUN1D1. Ubiquitinated; mediated by AREL1 and leading to its subsequent proteasomal degradation. Ubiquitination is dependent on phosphorylation at Ser-52, by PKC and is stimulated by LPS. In terms of processing, phosphorylation at Ser-52 by PKC facilitates its ubiquitination and proteasomal degradation. In terms of tissue distribution, expressed primarily in the testis, some expression in liver and lung.

It is found in the cytoplasm. Its pathway is protein modification; protein ubiquitination. Substrate-recognition component of a cullin-5-RING E3 ubiquitin-protein ligase complex (ECS complex, also named CRL5 complex), which mediates the ubiquitination and subsequent proteasomal degradation of target proteins, such as EPOR and GHR. Specifically recognizes and binds phosphorylated proteins via its SH2 domain, promoting their ubiquitination. The ECS(SOCS2) complex acts as a key regulator of growth hormone receptor (GHR) levels by mediating ubiquitination and degradation of GHR, following GHR phosphorylation by JAK2. The ECS(SOCS2) also catalyzes ubiquitination and degradation of JAK2-phosphorylated EPOR. The protein is Suppressor of cytokine signaling 2 of Mus musculus (Mouse).